We begin with the raw amino-acid sequence, 218 residues long: Capsid protein (218 aa).

An N-acetylmethionine; by host modification is found at methionine 1. Residues 1-28 (MDKSESTSAGRNRRRRPRRGSRSAPSSA) are disordered. Residues 11-21 (RNRRRRPRRGS) show a composition bias toward basic residues.

This sequence belongs to the cucumovirus capsid protein family.

It is found in the virion. Functionally, capsid protein. Probably binds RNA and plays a role in packaging. The sequence is that of Capsid protein from Cucumis sativus (Cucumber).